A 182-amino-acid chain; its full sequence is Methyl-CpG-binding domain-containing protein 5 (182 aa).

Disordered regions lie at residues 1–56 and 80–126; these read MSNG…GTVD and HGTP…KPLN. The MBD domain occupies 25-101; it reads KRATPGDDNW…ENGDSHSEHS (77 aa). The span at 92 to 105 shows a compositional bias: basic and acidic residues; the sequence is ENGDSHSEHSEGRG. Basic residues predominate over residues 106 to 115; it reads SARRQTKSNK.

Homodimer and heterodimer with MBD6. Interacts with DDM1 via its MBD domain. Mostly expressed in flowers, and, to a lower extent, in seedlings, buds, stems and mature seeds, but barely in roots, exclusively in root meristem cells at tips (at protein level).

Its subcellular location is the nucleus. The protein resides in the chromosome. Functionally, transcriptional regulator that binds CpG islands in promoters where the DNA is methylated at position 5 of cytosine within CpG dinucleotides. In addition, binds specifically methylated m(5)CpNpN but not m(5)CpNpG (N is A, T or C). Plays probably a role in gene silencing. This Arabidopsis thaliana (Mouse-ear cress) protein is Methyl-CpG-binding domain-containing protein 5 (MBD5).